Consider the following 283-residue polypeptide: Putative F-box protein At1g60370 (283 aa).

The F-box domain occupies 4–53 (GEKLESIPIDLIIEIHSRLPAESVARFRCVSKLWGSMFRRPYFTELFLTR).

The sequence is that of Putative F-box protein At1g60370 from Arabidopsis thaliana (Mouse-ear cress).